Reading from the N-terminus, the 405-residue chain is Subtilisin-like protease 6 (405 aa).

Residues 1-18 (FITKAIPIVLAALSAVNG) form the signal peptide. A propeptide spanning residues 19 to 125 (AKILEAGPHA…VRTSTNGTNL (107 aa)) is cleaved from the precursor. The 85-residue stretch at 34 to 118 (KYIVVMKKDV…YIEPDFVVRT (85 aa)) folds into the Inhibitor I9 domain. N-linked (GlcNAc...) asparagine glycans are attached at residues N121 and N124. In terms of domain architecture, Peptidase S8 spans 133–405 (SWGLARVGSK…GEGTTGKLIY (273 aa)). Residues D165 and H196 each act as charge relay system in the active site. N-linked (GlcNAc...) asparagine glycosylation is found at N250 and N262. Residue S356 is the Charge relay system of the active site.

The protein belongs to the peptidase S8 family.

The protein resides in the secreted. Secreted subtilisin-like serine protease with keratinolytic activity that contributes to pathogenicity. This is Subtilisin-like protease 6 (SUB6) from Trichophyton schoenleinii.